The primary structure comprises 1392 residues: FERM and PDZ domain-containing protein 2 (1392 aa).

A KIND domain is found at 15–197; the sequence is VTLASALQVR…SEVERRVVEE (183 aa). The disordered stretch occupies residues 211–246; that stretch reads SRLHQADGESPGAPASDALQPRRVSERSAETQSSLE. The region spanning 342–642 is the FERM domain; it reads CVVLLNGRCL…WFNAQTGSKH (301 aa). The PDZ 1 domain occupies 775–861; the sequence is GLFGEPNQDI…MAVRMIQNSP (87 aa). A disordered region spans residues 903–930; it reads GRQSPHIHDQDRSVRGTEMAQGAGSCPP. Positions 908 to 917 are enriched in basic and acidic residues; that stretch reads HIHDQDRSVR. Residues 937 to 1027 form an interaction with GRIN2A and GRIN2B region; that stretch reads TGEIYFVELV…VARLVLERRG (91 aa). PDZ domains follow at residues 950–1035 and 1079–1167; these read GTLG…PQCP and RGLG…PEME. The segment at 1186-1236 is disordered; it reads CAGSEQSPSLDQEDNWRDSTSLDAGEGLSPGPESSYKDVRQVKGDREKERP. Basic and acidic residues predominate over residues 1220 to 1236; sequence SYKDVRQVKGDREKERP.

In terms of assembly, interacts (via the second PDZ domain) with CTNND2 (via the extreme C-terminus). Interacts (via the second PDZ domain) with PKP4 (via the extreme C-terminus); the interaction directs FRMPD2 to the basolateral membranes. Interacts (via the second PDZ domain) with ARVCF (via the extreme C-terminus). Interacts (via the second PDZ domain) with NMDAR subunits GRIN2A/GLUN2A and GRIN2B/GLUN2B (via the extreme C-terminus); the interaction is direct and is likely to promote NMDAR-mediated neural signal transmission. Binds GRIN2A with lower affinity than GRIN2B. Interacts (via the third PDZ domain) with LRIT1 (via the extreme C-terminus); the interaction leads to their colocalization in photoreceptor synapses. Interacts with NOD2; the interaction is likely to trigger NOD2-mediated nuclear factor kappaB activation.

It is found in the cytoplasm. The protein localises to the postsynaptic density. Its subcellular location is the basolateral cell membrane. It localises to the cell junction. The protein resides in the tight junction. In terms of biological role, functions as a scaffold protein and likely plays a role in N-methyl-D-aspartic acid receptor (NMDAR)-mediated synaptic excitatory transmission. May be involved in synapse formation in cone photoreceptor cells. May play a role in the regulation of tight junction formation. Binds phosphatidylinositol 3,4-bisphosphate (PtdIns(3,4)P2). May pNF-kappa-Blay a role in the regulation of NOD2-mediated NF-kappa-B activation in immune response. The protein is FERM and PDZ domain-containing protein 2 of Mus musculus (Mouse).